Consider the following 248-residue polypeptide: MALLEICCYSMECALTAQQNGADRVELCAAPKEGGLTPSLGVLKSVRQWVTIPVHPIIRPRGGDFCYSDGEFAAILEDVLTVRELGFPGLVTGVLDVDGNVDMPRMEKIMAAAGPLAVTFHRAFDMCANPLNTLSNLAELGIARVLTSGQKSDALQGLSKIMELIAHRDAPIIMAGAGVRAENLHHFLDAGVLEVHSSAGAWQASPMRYRNQGLSMSSDAHADEYSRYVVDGAAVAEMKGIIERHQAK.

It belongs to the CutC family. In terms of assembly, homodimer.

The protein localises to the cytoplasm. The sequence is that of PF03932 family protein CutC from Shigella boydii serotype 18 (strain CDC 3083-94 / BS512).